We begin with the raw amino-acid sequence, 360 residues long: Isopentenyl-diphosphate delta-isomerase (360 aa).

6–7 (RK) is a binding site for substrate. Residues T62, 63–65 (GMT), S93, and N122 each bind FMN. A substrate-binding site is contributed by 93–95 (SQR). Residue Q157 participates in substrate binding. Position 158 (E158) interacts with Mg(2+). Residues K189, S214, T219, 272 to 274 (GIR), and 293 to 294 (AL) contribute to the FMN site.

It belongs to the IPP isomerase type 2 family. As to quaternary structure, homooctamer. Dimer of tetramers. FMN serves as cofactor. Requires NADPH as cofactor. The cofactor is Mg(2+).

The protein resides in the cytoplasm. The enzyme catalyses isopentenyl diphosphate = dimethylallyl diphosphate. Involved in the biosynthesis of isoprenoids. Catalyzes the 1,3-allylic rearrangement of the homoallylic substrate isopentenyl (IPP) to its allylic isomer, dimethylallyl diphosphate (DMAPP). This Ignicoccus hospitalis (strain KIN4/I / DSM 18386 / JCM 14125) protein is Isopentenyl-diphosphate delta-isomerase.